Consider the following 426-residue polypeptide: Enolase (426 aa).

Gln163 is a (2R)-2-phosphoglycerate binding site. Glu205 serves as the catalytic Proton donor. Mg(2+) contacts are provided by Asp242, Glu285, and Asp312. (2R)-2-phosphoglycerate contacts are provided by Lys337, Arg366, Ser367, and Lys388. Lys337 serves as the catalytic Proton acceptor.

This sequence belongs to the enolase family. Mg(2+) is required as a cofactor.

Its subcellular location is the cytoplasm. It localises to the secreted. The protein localises to the cell surface. The enzyme catalyses (2R)-2-phosphoglycerate = phosphoenolpyruvate + H2O. It participates in carbohydrate degradation; glycolysis; pyruvate from D-glyceraldehyde 3-phosphate: step 4/5. Catalyzes the reversible conversion of 2-phosphoglycerate (2-PG) into phosphoenolpyruvate (PEP). It is essential for the degradation of carbohydrates via glycolysis. The protein is Enolase of Rhodospirillum centenum (strain ATCC 51521 / SW).